The sequence spans 134 residues: ATP synthase epsilon chain (134 aa).

It belongs to the ATPase epsilon chain family. In terms of assembly, F-type ATPases have 2 components, CF(1) - the catalytic core - and CF(0) - the membrane proton channel. CF(1) has five subunits: alpha(3), beta(3), gamma(1), delta(1), epsilon(1). CF(0) has three main subunits: a, b and c.

Its subcellular location is the cellular thylakoid membrane. Functionally, produces ATP from ADP in the presence of a proton gradient across the membrane. This Prochlorococcus marinus (strain MIT 9215) protein is ATP synthase epsilon chain.